Here is a 169-residue protein sequence, read N- to C-terminus: Anaerobic nitrite reductase NSHB3 (169 aa).

The Globin domain maps to 15–165 (RFTEEQEALV…LVAAIKQGMK (151 aa)). Positions 48-52 (EVAPS) match the Homodimerization motif. Heme b-binding residues include S58, K72, H76, R106, T110, and H111. Positions 118–130 (DAHFEVAKFALLE) match the Homodimerization motif.

The protein belongs to the plant globin family. In terms of assembly, homodimer. Heme b serves as cofactor.

It is found in the cytoplasm. Its subcellular location is the nucleus. The catalysed reaction is Fe(III)-heme b-[protein] + nitric oxide + H2O = Fe(II)-heme b-[protein] + nitrite + 2 H(+). Phytoglobin that reduces nitrite to nitric oxide under anoxic conditions (e.g. during flooding or in waterlogged soil). May not function as an oxygen storage or transport protein. Has an unusually high affinity for O(2) through an hexacoordinate heme iron because of a very low dissociation constant. The sequence is that of Anaerobic nitrite reductase NSHB3 from Oryza sativa subsp. indica (Rice).